The primary structure comprises 100 residues: Small ribosomal subunit protein uS14c (100 aa).

This sequence belongs to the universal ribosomal protein uS14 family. As to quaternary structure, part of the 30S ribosomal subunit.

It is found in the plastid. It localises to the chloroplast. Its function is as follows. Binds 16S rRNA, required for the assembly of 30S particles. The polypeptide is Small ribosomal subunit protein uS14c (Lepidium virginicum (Virginia pepperweed)).